The following is a 146-amino-acid chain: Hemoglobin subunit beta (146 aa).

The 145-residue stretch at 2–146 (PFSAHEEKLI…VAAALSVEYY (145 aa)) folds into the Globin domain. Residues His63 and His92 each coordinate heme b.

The protein belongs to the globin family. In terms of assembly, heterotetramer of two alpha chains and two beta chains. When oxygenated in vitro, exists virtually only in polymeric form. When deoxygenated, forms tetramers, octamers and larger polymers. As to expression, red blood cells.

Its function is as follows. Involved in oxygen transport from the lung to the various peripheral tissues. This chain is Hemoglobin subunit beta, found in Paleosuchus palpebrosus (Cuvier's smooth-fronted caiman).